We begin with the raw amino-acid sequence, 367 residues long: 5-amino-6-(D-ribitylamino)uracil--L-tyrosine 4-hydroxyphenyl transferase (367 aa).

The region spanning 56–290 is the Radical SAM core domain; the sequence is VTYVRNQNIN…MFAVARLFLD (235 aa). Residues Cys70, Cys74, and Cys77 each coordinate [4Fe-4S] cluster.

The protein belongs to the radical SAM superfamily. CofH family. Consists of two subunits, CofG and CofH. It depends on [4Fe-4S] cluster as a cofactor.

The catalysed reaction is 5-amino-6-(D-ribitylamino)uracil + L-tyrosine + S-adenosyl-L-methionine = 5-amino-5-(4-hydroxybenzyl)-6-(D-ribitylimino)-5,6-dihydrouracil + 2-iminoacetate + 5'-deoxyadenosine + L-methionine + H(+). The protein operates within cofactor biosynthesis; coenzyme F0 biosynthesis. In terms of biological role, catalyzes the radical-mediated synthesis of 5-amino-5-(4-hydroxybenzyl)-6-(D-ribitylimino)-5,6-dihydrouracil from 5-amino-6-(D-ribitylamino)uracil and L-tyrosine. This Methanoculleus marisnigri (strain ATCC 35101 / DSM 1498 / JR1) protein is 5-amino-6-(D-ribitylamino)uracil--L-tyrosine 4-hydroxyphenyl transferase.